Consider the following 290-residue polypeptide: MADLDDIKDGKDFGLDRPQQHKAFYLKGSGALDWGMQSRLADIFNPKTGKTIMLAFDHGYFQGPTTGLERIDLHIAPLFEYTDVLMCTRGILRSVVPPETRKPVVLRASGANSILTELSNEAVAVSVEDALRLNVSAMAAQVYIGSEHEHQSIKNIIQLVDQGTRYGMPTMAVTGVGKDMARDQRYFSLATRIAAEMGAHIIKTYYVDKGFERITAGCPVPIVIAGGKKLPEREALEMCYQAIDQGALGVDMGRNIFQSEAPIAMLKAVHAVVHGGETAEKAYQLYLDEK.

K203 acts as the Schiff-base intermediate with substrate in catalysis.

It belongs to the DeoC/FbaB aldolase family.

This is an uncharacterized protein from Pasteurella multocida (strain Pm70).